Consider the following 496-residue polypeptide: Membrane-bound lytic murein transglycosylase F (496 aa).

A signal peptide spans 1–29 (MFFRPDFRPRCAKWLIATGLFLMLGACVE). The interval 30-267 (KPTTLERVKE…RLKDRYYGHV (238 aa)) is non-LT domain. The segment at 268–496 (DVLGYVGAYT…SGSSPDKPAL (229 aa)) is LT domain. Residue Glu314 is part of the active site. Positions 464-496 (VADGNLHVPGVDKTQPPAPPAPASGSSPDKPAL) are disordered. The span at 486–496 (ASGSSPDKPAL) shows a compositional bias: low complexity.

The protein in the N-terminal section; belongs to the bacterial solute-binding protein 3 family. This sequence in the C-terminal section; belongs to the transglycosylase Slt family.

It localises to the cell outer membrane. The enzyme catalyses Exolytic cleavage of the (1-&gt;4)-beta-glycosidic linkage between N-acetylmuramic acid (MurNAc) and N-acetylglucosamine (GlcNAc) residues in peptidoglycan, from either the reducing or the non-reducing ends of the peptidoglycan chains, with concomitant formation of a 1,6-anhydrobond in the MurNAc residue.. Its function is as follows. Murein-degrading enzyme that degrades murein glycan strands and insoluble, high-molecular weight murein sacculi, with the concomitant formation of a 1,6-anhydromuramoyl product. Lytic transglycosylases (LTs) play an integral role in the metabolism of the peptidoglycan (PG) sacculus. Their lytic action creates space within the PG sacculus to allow for its expansion as well as for the insertion of various structures such as secretion systems and flagella. This Pseudomonas savastanoi pv. phaseolicola (strain 1448A / Race 6) (Pseudomonas syringae pv. phaseolicola (strain 1448A / Race 6)) protein is Membrane-bound lytic murein transglycosylase F.